Consider the following 649-residue polypeptide: ENTH domain-containing protein C19F8.03c (649 aa).

The ENTH domain maps to 2 to 136; that stretch reads SPSKWLLTYE…VDYAQVGDAP (135 aa). Disordered stretches follow at residues 280–382, 409–440, and 590–649; these read YLQN…NELE, LSAEGTSASPSLDKKSESTNIVQPIPSHPNDS, and FTHG…PFRS. Ser285 and Ser287 each carry phosphoserine. Residues 299–308 show a composition bias toward basic residues; that stretch reads PTLRKKKSIP. 2 stretches are compositionally biased toward polar residues: residues 313–326 and 340–349; these read ESSSTIQKENTVQQ and PETQRTTSRI. Positions 352 to 381 are enriched in acidic residues; it reads QEEEIKEEEMEGEEEEEEEEVPNYESENEL. 3 stretches are compositionally biased toward polar residues: residues 409 to 418, 614 to 624, and 635 to 649; these read LSAEGTSASP, TPYTASKNPFS, and ARNSISTESKNPFRS. Phosphothreonine is present on Thr414. Ser417 carries the phosphoserine modification.

It is found in the cytoplasm. This Schizosaccharomyces pombe (strain 972 / ATCC 24843) (Fission yeast) protein is ENTH domain-containing protein C19F8.03c.